A 323-amino-acid polypeptide reads, in one-letter code: Probable pectate lyase A (323 aa).

An N-terminal signal peptide occupies residues 1–20 (MTNFKWIVAAAGLLSGQVLA). N-linked (GlcNAc...) asparagine glycosylation is present at Asn-95. Ca(2+) contacts are provided by Asp-136, Asp-165, and Asp-169. The active site involves Arg-222.

The protein belongs to the polysaccharide lyase 1 family. The cofactor is Ca(2+).

Its subcellular location is the secreted. The catalysed reaction is Eliminative cleavage of (1-&gt;4)-alpha-D-galacturonan to give oligosaccharides with 4-deoxy-alpha-D-galact-4-enuronosyl groups at their non-reducing ends.. Functionally, pectinolytic enzyme consist of four classes of enzymes: pectin lyase, polygalacturonase, pectin methylesterase and rhamnogalacturonase. Among pectinolytic enzymes, pectin lyase is the most important in depolymerization of pectin, since it cleaves internal glycosidic bonds of highly methylated pectins. Favors pectate, the anion, over pectin, the methyl ester. In Aspergillus niger (strain ATCC MYA-4892 / CBS 513.88 / FGSC A1513), this protein is Probable pectate lyase A (plyA).